A 320-amino-acid chain; its full sequence is MGGMNDLSSTPAPEGDRPARQRKPDWIRVKAPVSKGYHETRKLMRELNLNTVCEEAACPNIGECWTKKHATVMILGDVCTRACAFCNVKTGMPRIVDPMEPENTAIAAAKMGLQHIVITSVDRDDLPDGGAGQFVKVIEALRRETPDTTIEILTPDFRGKMRAAVEAICEAGPDVYNHNLETVPRLYPTIRPGARYYASLRLLEEVKSHDPMIFTKSGIMLGLGEQRLEVHQVMDDMRSADVDFITMGQYLQPTPKHAKVEDFVTPKAFDAFGAIARAKGFLQVASSPLTRSSYHAGDDFAEMRAAREAKLAKERERAQG.

Positions 1–11 (MGGMNDLSSTP) are enriched in polar residues. Positions 1 to 24 (MGGMNDLSSTPAPEGDRPARQRKP) are disordered. A compositionally biased stretch (basic and acidic residues) spans 14–24 (EGDRPARQRKP). 7 residues coordinate [4Fe-4S] cluster: Cys-53, Cys-58, Cys-64, Cys-79, Cys-83, Cys-86, and Ser-293. In terms of domain architecture, Radical SAM core spans 65–282 (WTKKHATVMI…GAIARAKGFL (218 aa)).

It belongs to the radical SAM superfamily. Lipoyl synthase family. [4Fe-4S] cluster is required as a cofactor.

It is found in the cytoplasm. It catalyses the reaction [[Fe-S] cluster scaffold protein carrying a second [4Fe-4S](2+) cluster] + N(6)-octanoyl-L-lysyl-[protein] + 2 oxidized [2Fe-2S]-[ferredoxin] + 2 S-adenosyl-L-methionine + 4 H(+) = [[Fe-S] cluster scaffold protein] + N(6)-[(R)-dihydrolipoyl]-L-lysyl-[protein] + 4 Fe(3+) + 2 hydrogen sulfide + 2 5'-deoxyadenosine + 2 L-methionine + 2 reduced [2Fe-2S]-[ferredoxin]. The protein operates within protein modification; protein lipoylation via endogenous pathway; protein N(6)-(lipoyl)lysine from octanoyl-[acyl-carrier-protein]: step 2/2. Catalyzes the radical-mediated insertion of two sulfur atoms into the C-6 and C-8 positions of the octanoyl moiety bound to the lipoyl domains of lipoate-dependent enzymes, thereby converting the octanoylated domains into lipoylated derivatives. The polypeptide is Lipoyl synthase (Erythrobacter litoralis (strain HTCC2594)).